Here is a 259-residue protein sequence, read N- to C-terminus: Leucine-rich repeat-containing protein 3B (259 aa).

A signal peptide spans M1–M33. Residues C34–P64 form the LRRNT domain. N-linked (GlcNAc...) asparagine glycosylation is present at N47. LRR repeat units lie at residues E65–D86, Q89–G110, and T114–N135. Residue N94 is glycosylated (N-linked (GlcNAc...) asparagine). The LRRCT domain occupies N145–L197. Residues A205–V225 form a helical membrane-spanning segment.

It belongs to the LRRC3 family.

It localises to the membrane. The sequence is that of Leucine-rich repeat-containing protein 3B (Lrrc3b) from Mus musculus (Mouse).